An 866-amino-acid chain; its full sequence is Phospholipase D gamma 3 (866 aa).

One can recognise a C2 domain in the interval 31–170 (PFDTSSGSLR…CSGNRIEGLF (140 aa)). Aspartate 232 is a Ca(2+) binding site. Positions 371–406 (TIYTHHQKTMIVDAEAAQNRRKIVAFVGGLDLCNGR) constitute a PLD phosphodiesterase 1 domain. Residues histidine 376, lysine 378, and aspartate 383 contribute to the active site. Histidine 376 is an a 1,2-diacyl-sn-glycero-3-phosphate binding site. Ca(2+) is bound by residues histidine 412 and histidine 444. Glutamine 572 contacts a 1,2-diacyl-sn-glycero-3-phosphate. Serine 692 is modified (phosphoserine). The PLD phosphodiesterase 2 domain occupies 712–739 (FMIYVHSKGMVVDDEFVLIGSANINQRS). Catalysis depends on residues histidine 717, lysine 719, and aspartate 724. Residue histidine 717 participates in a 1,2-diacyl-sn-glycero-3-phosphate binding. Glutamate 780 provides a ligand contact to Ca(2+).

This sequence belongs to the phospholipase D family. C2-PLD subfamily. Requires Ca(2+) as cofactor. As to expression, highly expressed in inflorescences and old leaves, moderately in stems, roots, siliques and young leaves and low in flowers.

Its subcellular location is the cytoplasm. It is found in the membrane. It catalyses the reaction a 1,2-diacyl-sn-glycero-3-phosphocholine + H2O = a 1,2-diacyl-sn-glycero-3-phosphate + choline + H(+). Its activity is regulated as follows. Inhibited by neomycin. In terms of biological role, hydrolyzes glycerol-phospholipids at the terminal phosphodiesteric bond to generate phosphatidic acids (PA). Plays an important role in various cellular processes, including phytohormone action, vesicular trafficking, secretion, cytoskeletal arrangement, meiosis, tumor promotion, pathogenesis, membrane deterioration and senescence. Can use phosphatidylserine but prefers ethanolamine-containing lipids as substrates. This chain is Phospholipase D gamma 3, found in Arabidopsis thaliana (Mouse-ear cress).